A 427-amino-acid chain; its full sequence is Trigger factor (427 aa).

Residues 163–248 (GDIAVIDFKG…IKSIKVKELP (86 aa)) form the PPIase FKBP-type domain.

The protein belongs to the FKBP-type PPIase family. Tig subfamily.

Its subcellular location is the cytoplasm. It catalyses the reaction [protein]-peptidylproline (omega=180) = [protein]-peptidylproline (omega=0). Involved in protein export. Acts as a chaperone by maintaining the newly synthesized protein in an open conformation. Functions as a peptidyl-prolyl cis-trans isomerase. The protein is Trigger factor of Clostridium beijerinckii (strain ATCC 51743 / NCIMB 8052) (Clostridium acetobutylicum).